We begin with the raw amino-acid sequence, 29 residues long: Potassium channel toxin alpha-KTx 8.4 (29 aa).

Intrachain disulfides connect Cys-3-Cys-19, Cys-6-Cys-24, and Cys-10-Cys-26.

It belongs to the short scorpion toxin superfamily. Potassium channel inhibitor family. Alpha-KTx 08 subfamily. As to expression, expressed by the venom gland.

It localises to the secreted. Functionally, inhibits voltage-gated potassium channels. In Leiurus hebraeus (Hebrew deathstalker scorpion), this protein is Potassium channel toxin alpha-KTx 8.4.